A 733-amino-acid polypeptide reads, in one-letter code: Phosphoribosylformylglycinamidine synthase subunit PurL (733 aa).

Residue histidine 44 is part of the active site. Residues tyrosine 47 and lysine 86 each coordinate ATP. Residue glutamate 88 coordinates Mg(2+). Substrate is bound by residues 89–92 and arginine 111; that span reads SHNH. Catalysis depends on histidine 90, which acts as the Proton acceptor. Mg(2+) is bound at residue aspartate 112. Glutamine 233 lines the substrate pocket. Aspartate 261 contacts Mg(2+). 305–307 is a binding site for substrate; sequence ESQ. Aspartate 492 and glycine 529 together coordinate ATP. Residue asparagine 530 coordinates Mg(2+). Serine 532 serves as a coordination point for substrate.

The protein belongs to the FGAMS family. In terms of assembly, monomer. Part of the FGAM synthase complex composed of 1 PurL, 1 PurQ and 2 PurS subunits.

The protein localises to the cytoplasm. The enzyme catalyses N(2)-formyl-N(1)-(5-phospho-beta-D-ribosyl)glycinamide + L-glutamine + ATP + H2O = 2-formamido-N(1)-(5-O-phospho-beta-D-ribosyl)acetamidine + L-glutamate + ADP + phosphate + H(+). It functions in the pathway purine metabolism; IMP biosynthesis via de novo pathway; 5-amino-1-(5-phospho-D-ribosyl)imidazole from N(2)-formyl-N(1)-(5-phospho-D-ribosyl)glycinamide: step 1/2. In terms of biological role, part of the phosphoribosylformylglycinamidine synthase complex involved in the purines biosynthetic pathway. Catalyzes the ATP-dependent conversion of formylglycinamide ribonucleotide (FGAR) and glutamine to yield formylglycinamidine ribonucleotide (FGAM) and glutamate. The FGAM synthase complex is composed of three subunits. PurQ produces an ammonia molecule by converting glutamine to glutamate. PurL transfers the ammonia molecule to FGAR to form FGAM in an ATP-dependent manner. PurS interacts with PurQ and PurL and is thought to assist in the transfer of the ammonia molecule from PurQ to PurL. This chain is Phosphoribosylformylglycinamidine synthase subunit PurL, found in Thermomicrobium roseum (strain ATCC 27502 / DSM 5159 / P-2).